A 395-amino-acid polypeptide reads, in one-letter code: MATVDRWLLPDGIEEVLPPEAARIEVARRQVLDLFQSWGYEFVVTPHIEYLESLLTGAGSDLDLRTFKVIDPQSGRQMGFRADITPQVARIDAHTLKREGPSRLCYAGSVLHAQPRALSSSRSPIQLGAELYGDASPSSDVEVISLMLAMLQLADVPDVHMDLGHVGIYRGLARAAGLSGEVEQQLFDALQRKAIDEVVALTANLPPELASMLRALVDLCGGREVLDAARDRLAGAPAPVLEALDDLLAIADRLAARFPQLPLYFDLGELRGYHYHTGVVFAVFVPGVGQSIAQGGRYDDIGADFGRARPATGFSTDLKTLVTLGQAEIVLPSGGIWMPDSTDAALWQQVCQLRSEGQRVVQALPGQQVSAAREADCDRQLIQHGEHWQVMPLAS.

This sequence belongs to the class-II aminoacyl-tRNA synthetase family. HisZ subfamily. As to quaternary structure, heteromultimer composed of HisG and HisZ subunits.

The protein resides in the cytoplasm. It participates in amino-acid biosynthesis; L-histidine biosynthesis; L-histidine from 5-phospho-alpha-D-ribose 1-diphosphate: step 1/9. In terms of biological role, required for the first step of histidine biosynthesis. May allow the feedback regulation of ATP phosphoribosyltransferase activity by histidine. This Pseudomonas syringae pv. tomato (strain ATCC BAA-871 / DC3000) protein is ATP phosphoribosyltransferase regulatory subunit.